The chain runs to 197 residues: Prefoldin subunit 3 (197 aa).

N-acetylalanine is present on A2. K59 is modified (N6-acetyllysine).

The protein belongs to the prefoldin subunit alpha family. As to quaternary structure, heterohexamer of two PFD-alpha type and four PFD-beta type subunits. Binds to the C-terminal part of VHL.

It is found in the cytoplasm. It localises to the nucleus. Binds specifically to cytosolic chaperonin (c-CPN) and transfers target proteins to it. Binds to nascent polypeptide chain and promotes folding in an environment in which there are many competing pathways for nonnative proteins. In Bos taurus (Bovine), this protein is Prefoldin subunit 3 (VBP1).